The primary structure comprises 373 residues: Probable G-protein coupled receptor 173 (373 aa).

Residues 1 to 26 (MANTTGEPEEVSGALSPPSAVAYVKL) lie on the Extracellular side of the membrane. Asn-3 is a glycosylation site (N-linked (GlcNAc...) asparagine). Residues 27–47 (VLLGLIMCVSLAGNAILSLLV) traverse the membrane as a helical segment. The Cytoplasmic segment spans residues 48–59 (LKDRALHKAPYY). Residues 60 to 80 (FLLDLCLADGIRSAVCFPFVL) form a helical membrane-spanning segment. The Extracellular portion of the chain corresponds to 81 to 97 (ASVRHGSSWTFSALSCK). Cys-96 and Cys-174 form a disulfide bridge. A helical membrane pass occupies residues 98–118 (IVAFMAVLFCFHAAFMLFCIS). Residues 119-139 (VTRYMAIAHHRFYAKRMTLWT) lie on the Cytoplasmic side of the membrane. Residues 140–160 (CAAVICMAWTLSVAMAFPPVF) traverse the membrane as a helical segment. Topologically, residues 161 to 188 (DVGTYKFIREEDQCIFEHRYFKANDTLG) are extracellular. The N-linked (GlcNAc...) asparagine glycan is linked to Asn-184. Residues 189 to 209 (FMLMLAVLMAATHAVYGKLLL) traverse the membrane as a helical segment. Over 210 to 287 (FEYRHRKMKP…VKGEKQLGRM (78 aa)) the chain is Cytoplasmic. The chain crosses the membrane as a helical span at residues 288 to 308 (FYAITLLFLLLWSPYIVACYW). Over 309–322 (RVFVKACAVPHRYL) the chain is Extracellular. The helical transmembrane segment at 323–343 (ATAVWMSFAQAAVNPIVCFLL) threads the bilayer. The Cytoplasmic portion of the chain corresponds to 344 to 373 (NKDLKKCLRTHAPCWGTGGAPAPREPYCVM).

This sequence belongs to the G-protein coupled receptor 1 family.

Its subcellular location is the cell membrane. Its function is as follows. Is a receptor for the SMIM20 derived peptides Phoenixin-14 and Phoenixin-20. It mediates the Phoenixin-14 and Phoenixin-20 augmentation of gonadotropin-releasing hormone (GNRH) signaling in the hypothalamus and pituitary gland. In the ovary, it mediates the effects of Phoenixin-14 and Phoenixin-20 induced granulosa cell proliferation during follicular growth. The sequence is that of Probable G-protein coupled receptor 173 (GPR173) from Bos taurus (Bovine).